The primary structure comprises 142 residues: 3-hydroxyacyl-[acyl-carrier-protein] dehydratase FabZ (142 aa).

His-50 is an active-site residue.

It belongs to the thioester dehydratase family. FabZ subfamily.

Its subcellular location is the cytoplasm. It carries out the reaction a (3R)-hydroxyacyl-[ACP] = a (2E)-enoyl-[ACP] + H2O. In terms of biological role, involved in unsaturated fatty acids biosynthesis. Catalyzes the dehydration of short chain beta-hydroxyacyl-ACPs and long chain saturated and unsaturated beta-hydroxyacyl-ACPs. The sequence is that of 3-hydroxyacyl-[acyl-carrier-protein] dehydratase FabZ from Clostridium botulinum (strain Alaska E43 / Type E3).